A 4910-amino-acid chain; its full sequence is Midasin (4910 aa).

AAA-ATPase protomer regions lie at residues 305–528 (IQNS…DILF) and 636–975 (MEQI…TDII). Residues 315-322 (GKAGSGKT) and 653-660 (GETGTGKT) contribute to the ATP site. Positions 695 to 803 (VNSKTVAVPI…KKFEAQSSSI (109 aa)) are interaction with RIX1. T1026 carries the phosphothreonine modification. AAA-ATPase protomer stretches follow at residues 1054-1280 (HYII…WALR), 1345-1624 (KGMR…VEFI), 1732-1985 (RVVR…QLLI), and 2036-2286 (VYES…DELH). ATP contacts are provided by residues 1083–1090 (GPTSSGKT), 1368–1375 (GETGCGKT), 1747–1754 (GSPGVGKT), and 2054–2061 (GPSNSGKT). The segment at 2372 to 4075 (EVGKWANNVL…DGEGAQNNNK (1704 aa)) is linker. S2971 bears the Phosphoserine mark. Disordered regions lie at residues 4045–4547 (SPQP…EKMD), 4555–4574 (SDIDAHDANNDVDSKKSGFI), and 4579–4600 (SEEDFENELSNEHFSADQEDDS). Residues 4078–4088 (EQDEDLTEDAQ) show a composition bias toward acidic residues. Over residues 4089 to 4098 (NENKEQQDKD) the composition is skewed to basic and acidic residues. The segment covering 4099-4154 (ERDDENEDDAVEMEGDMAGELEDLSNGEENDDEDTDSEEEELDEEIDDLNEDDPNA) has biased composition (acidic residues). Basic and acidic residues predominate over residues 4155–4174 (IDDKMWDDKASDNSKEKDTD). Acidic residues-rich tracts occupy residues 4202–4244 (GDED…EDLE), 4251–4274 (ETLDLPEDMNLDSEHEESDEDVDM), and 4288–4358 (GNED…EEEL). S4353 is modified (phosphoserine). Positions 4359-4372 (KQDAAMEENKEKGG) are enriched in basic and acidic residues. Residue T4388 is modified to Phosphothreonine. Composition is skewed to basic and acidic residues over residues 4435–4447 (DVTKNNEESREEA) and 4481–4495 (LEKNNERPDEFEHVE). The span at 4498-4516 (NTETDTQALGSATQDQLQT) shows a compositional bias: polar residues. The span at 4517–4531 (IDEDMAIDDDREEQE) shows a compositional bias: acidic residues. Phosphoserine is present on S4555. Positions 4557-4570 (IDAHDANNDVDSKK) are enriched in basic and acidic residues. Positions 4704 to 4899 (QIMIALDDSK…SELPEMLSLI (196 aa)) constitute a VWFA domain.

This sequence belongs to the midasin family. In terms of assembly, associates with pre-60S ribosomes in the nucleoplasm. Interacts (via its hexameric AAA ATPase ring) with the RIX1 complex (via RIX1); this interaction is crucial for recruitment of MDN1 to the pre-ribosomal particle. Interacts (via VWFA/MIDAS domain) with YTM1 (via UBL domain). Interacts (via VWFA/MIDAS domain) with RSA4 (via UBL domain).

Its subcellular location is the nucleus. It is found in the nucleolus. The protein resides in the nucleoplasm. Nuclear chaperone required for maturation and nuclear export of pre-60S ribosome subunits. Functions at successive maturation steps to remove ribosomal factors at critical transition points, first driving the exit of early pre-60S particles from the nucleolus and then driving late pre-60S particles from the nucleus. At an early stage in 60S maturation, mediates the dissociation of the NOP7 complex (YTM1-ERB1-NOP7) from early pre-60S particles, rendering them competent for export from the nucleolus to the nucleoplasm. Subsequently recruited to the nucleoplasmic particles through interaction with the RIX1 complex. This binding is only possible if the 5S RNP at the central protuberance has undergone the rotation to complete its maturation. After remodeling, removes the ribosome biogenesis factor RSA4 in an ATP hydrolysis-driven step from pre-60S ribosomal subunits, rendering them competent for export from the nucleoplasm to the cytoplasm. Activates the GTPase activity of NOG2, which disengages from the pre-60S particle upon GTP hydrolysis, thus freeing its binding site for the nuclear export factor NMD3. The chain is Midasin (MDN1) from Saccharomyces cerevisiae (strain ATCC 204508 / S288c) (Baker's yeast).